The sequence spans 121 residues: uncharacterized protein (121 aa).

This is an uncharacterized protein from Schizosaccharomyces pombe (strain 972 / ATCC 24843) (Fission yeast).